The primary structure comprises 211 residues: Small ribosomal subunit protein uS3 (211 aa).

The KH type-2 domain occupies 38–106; sequence LRNFLKKRLY…EVYLNIQEVR (69 aa).

It belongs to the universal ribosomal protein uS3 family. In terms of assembly, part of the 30S ribosomal subunit. Forms a tight complex with proteins S10 and S14.

Its function is as follows. Binds the lower part of the 30S subunit head. Binds mRNA in the 70S ribosome, positioning it for translation. The chain is Small ribosomal subunit protein uS3 from Geobacter sp. (strain M21).